The chain runs to 288 residues: Acetyl-coenzyme A carboxylase carboxyl transferase subunit beta (288 aa).

The CoA carboxyltransferase N-terminal domain maps to leucine 34–glutamine 288. Residues cysteine 38, cysteine 41, cysteine 56, and cysteine 59 each contribute to the Zn(2+) site. The segment at cysteine 38–cysteine 59 adopts a C4-type zinc-finger fold.

The protein belongs to the AccD/PCCB family. In terms of assembly, acetyl-CoA carboxylase is a heterohexamer composed of biotin carboxyl carrier protein (AccB), biotin carboxylase (AccC) and two subunits each of ACCase subunit alpha (AccA) and ACCase subunit beta (AccD). Requires Zn(2+) as cofactor.

The protein localises to the cytoplasm. It carries out the reaction N(6)-carboxybiotinyl-L-lysyl-[protein] + acetyl-CoA = N(6)-biotinyl-L-lysyl-[protein] + malonyl-CoA. It functions in the pathway lipid metabolism; malonyl-CoA biosynthesis; malonyl-CoA from acetyl-CoA: step 1/1. In terms of biological role, component of the acetyl coenzyme A carboxylase (ACC) complex. Biotin carboxylase (BC) catalyzes the carboxylation of biotin on its carrier protein (BCCP) and then the CO(2) group is transferred by the transcarboxylase to acetyl-CoA to form malonyl-CoA. This Streptococcus pyogenes serotype M3 (strain ATCC BAA-595 / MGAS315) protein is Acetyl-coenzyme A carboxylase carboxyl transferase subunit beta.